Reading from the N-terminus, the 1203-residue chain is Cingulin (1203 aa).

Residues 7-357 (MAEPRGPVDH…VMVSSGSTKA (351 aa)) form a head region. A disordered region spans residues 25-48 (EPVSGAEMGTLRRGGRRPAKDARA). Residues 48–62 (ASTYGVAVRVQGIAG) carry the ZIM motif. An interaction with TJP1/ZO1 region spans residues 54–67 (AVRVQGIAGQPFVV). A disordered region spans residues 89 to 127 (GASGALSSDLELPENPYSQVKGFPAPSQSSTSDEEPGAY). Residues Ser95, Ser96, Ser135, Ser137, Ser140, Ser155, Ser165, Ser214, Ser217, Ser258, Ser276, Ser338, and Ser351 each carry the phosphoserine modification. The disordered stretch occupies residues 186–266 (DSQLGGQARG…LSPLSGFSRS (81 aa)). The segment covering 207–231 (EQRKRSKSLDSRLPRDTFEERERQS) has biased composition (basic and acidic residues). Residues 232–266 (TNHWTSSTKYDNHVGTSKQPAQSQNLSPLSGFSRS) show a composition bias toward polar residues. A coiled-coil region spans residues 358-1160 (VAGQGELTRK…SLEKDSWRKA (803 aa)). N6-acetyllysine is present on Lys579. A Phosphothreonine modification is found at Thr712. Disordered stretches follow at residues 1034–1053 (LASS…LESQ) and 1154–1181 (KDSW…EEFD). Over residues 1044-1053 (SASLSQLESQ) the composition is skewed to low complexity. The interval 1161–1203 (SRSAAESALKNEGLSSDEEFDSVYDPSSIASLLTESNLQTSSC) is tail. Phosphoserine is present on residues Ser1175, Ser1176, and Ser1182.

The protein belongs to the cingulin family. Homodimer. Interacts with TJP1/ZO1. Interacts with SPEF1. As to expression, localized on the cytoplasmic face of tight junctions of polarized epithelia and some endothelia. Expressed in pancreas, kidney, liver and lung, but not in skeletal muscle, placenta, brain or heart.

Its subcellular location is the cell junction. It localises to the tight junction. In terms of biological role, probably plays a role in the formation and regulation of the tight junction (TJ) paracellular permeability barrier. The chain is Cingulin from Homo sapiens (Human).